Reading from the N-terminus, the 199-residue chain is Venom allergen 5 (199 aa).

2 cysteine pairs are disulfide-bonded: C21–C87 and C167–C184. Residues 38 to 186 (LKVHNDERQK…FYKCYLACNY (149 aa)) enclose the SCP domain. The interval 47–67 (KVKAGQETRGNPGPQPAASNM) is disordered.

This sequence belongs to the CRISP family. Venom allergen 5-like subfamily. Expressed by the venom gland.

The protein resides in the secreted. This is Venom allergen 5 from Brachyponera chinensis (Asian needle ant).